The chain runs to 142 residues: Hemoglobin subunit zeta (142 aa).

Ser-2 is subject to N-acetylserine. Residues 2–142 (SLTKAERTMV…VSSVLTEKYR (141 aa)) form the Globin domain. A Phosphoserine modification is found at Ser-53. His-59 is a binding site for heme b. Phosphoserine is present on Ser-73. His-88 is a heme b binding site.

It belongs to the globin family. In terms of assembly, heterotetramer of two zeta chains and beta-type chains.

The zeta chain is an alpha-type chain of mammalian embryonic hemoglobin. This Equus caballus (Horse) protein is Hemoglobin subunit zeta (HBZ1).